The primary structure comprises 81 residues: Large ribosomal subunit protein bL31B (81 aa).

This sequence belongs to the bacterial ribosomal protein bL31 family. Type B subfamily. Part of the 50S ribosomal subunit.

The polypeptide is Large ribosomal subunit protein bL31B (Bacillus licheniformis (strain ATCC 14580 / DSM 13 / JCM 2505 / CCUG 7422 / NBRC 12200 / NCIMB 9375 / NCTC 10341 / NRRL NRS-1264 / Gibson 46)).